A 406-amino-acid polypeptide reads, in one-letter code: MARAFLFVLDSFGVGGAPDAPAYGDDGADTLGHIAEFCAAGAGDRDGLRAGPLMLPNLSALGLLQIASLASGSLPAGMALPERVFGLYGAANEISRGKDTPSGHWEIAGTPVMFDWGYFPQEGDAFPADLVADICKRADLPGILGNCHASGTDILARLGEEHCRTGQPICYTSSDSVFQIAAHEHVFGLERLLRLCEIVRELLTPYRIGRVIARPFIGNSASNFQRTGNRRDYSVPPPEPTLLDRLSEAGRTVHAIGKIGDIFAHQGTGRDIKANGNAALMEATLAVMDEAADGDLVFTNFVDFDMLYGHRRDVPGYAAALEAFDLWLPDVYRKLIPGDMVILTADHGCDPTWRGTDHTRERVPIMAFGPGIRARSIGIRDTYADIGETIAAHLGIAPGRHGMSFL.

Residues D10, D305, H310, D346, H347, and H358 each contribute to the Mn(2+) site.

This sequence belongs to the phosphopentomutase family. Mn(2+) serves as cofactor.

The protein localises to the cytoplasm. It catalyses the reaction 2-deoxy-alpha-D-ribose 1-phosphate = 2-deoxy-D-ribose 5-phosphate. The catalysed reaction is alpha-D-ribose 1-phosphate = D-ribose 5-phosphate. It participates in carbohydrate degradation; 2-deoxy-D-ribose 1-phosphate degradation; D-glyceraldehyde 3-phosphate and acetaldehyde from 2-deoxy-alpha-D-ribose 1-phosphate: step 1/2. Its function is as follows. Isomerase that catalyzes the conversion of deoxy-ribose 1-phosphate (dRib-1-P) and ribose 1-phosphate (Rib-1-P) to deoxy-ribose 5-phosphate (dRib-5-P) and ribose 5-phosphate (Rib-5-P), respectively. The polypeptide is Phosphopentomutase (Allorhizobium ampelinum (strain ATCC BAA-846 / DSM 112012 / S4) (Agrobacterium vitis (strain S4))).